A 482-amino-acid chain; its full sequence is MRVIKGNKCDWEVVIGLEVHAQVISNSKLFSGASAKTYDAPPNTQVSLFDVAMPGMLPVLNEYCIYQAVKTGIALSCKISKYSAFDRKNYFYPDLPAGYQITQFYYPIATEGKVVLEDHNAKEVRIARIHLEQDAGKSIHEFSQTYIDFNRAGVALMEIVSEPDLRSVEEVAEYLKKLRMILRFIGTCDGDMEKGSFRCDANVSVRPFGSNELGVRSEIKNLNSIRYVMQAIEYEANKQVNILENNEIFTQNTLLFDVSLGQTRVIRTKEDAHDYRYFPDPDLFPVKIDDQYIDHVKSLLPELPLQKRDRYINDFNLNKSDADILSSDKDVAMYFEKVVEKHDARLAASWIIGELFGRLNKLGITIDESSVKAEHLIQLLDLIVDNTISGKIAKQVFDMMFESGKLPALIVSEHGLKQVDDADVLYVVVEKILKDNASKVEEYKQGKEKLFGYFVGQVMKETQGKANPEMVNSIIKQQLESK.

This sequence belongs to the GatB/GatE family. GatB subfamily. As to quaternary structure, heterotrimer of A, B and C subunits.

The catalysed reaction is L-glutamyl-tRNA(Gln) + L-glutamine + ATP + H2O = L-glutaminyl-tRNA(Gln) + L-glutamate + ADP + phosphate + H(+). It carries out the reaction L-aspartyl-tRNA(Asn) + L-glutamine + ATP + H2O = L-asparaginyl-tRNA(Asn) + L-glutamate + ADP + phosphate + 2 H(+). Functionally, allows the formation of correctly charged Asn-tRNA(Asn) or Gln-tRNA(Gln) through the transamidation of misacylated Asp-tRNA(Asn) or Glu-tRNA(Gln) in organisms which lack either or both of asparaginyl-tRNA or glutaminyl-tRNA synthetases. The reaction takes place in the presence of glutamine and ATP through an activated phospho-Asp-tRNA(Asn) or phospho-Glu-tRNA(Gln). The protein is Aspartyl/glutamyl-tRNA(Asn/Gln) amidotransferase subunit B of Ehrlichia canis (strain Jake).